We begin with the raw amino-acid sequence, 352 residues long: Peptide chain release factor 1 (352 aa).

Residue Gln233 is modified to N5-methylglutamine. The segment at 288 to 309 (NAKDRKEQVGSGDRSERIRTYN) is disordered. Over residues 289–306 (AKDRKEQVGSGDRSERIR) the composition is skewed to basic and acidic residues.

This sequence belongs to the prokaryotic/mitochondrial release factor family. Methylated by PrmC. Methylation increases the termination efficiency of RF1.

The protein resides in the cytoplasm. Its function is as follows. Peptide chain release factor 1 directs the termination of translation in response to the peptide chain termination codons UAG and UAA. The sequence is that of Peptide chain release factor 1 (prfA) from Helicobacter pylori (strain ATCC 700392 / 26695) (Campylobacter pylori).